The sequence spans 86 residues: Small ribosomal subunit protein bS16 (86 aa).

It belongs to the bacterial ribosomal protein bS16 family.

This Legionella pneumophila (strain Paris) protein is Small ribosomal subunit protein bS16.